The sequence spans 429 residues: Ribosomal RNA small subunit methyltransferase B (429 aa).

S-adenosyl-L-methionine contacts are provided by residues 254–260 (CAAPGGK), aspartate 277, aspartate 303, and aspartate 322. Cysteine 375 acts as the Nucleophile in catalysis.

Belongs to the class I-like SAM-binding methyltransferase superfamily. RsmB/NOP family.

The protein localises to the cytoplasm. It carries out the reaction cytidine(967) in 16S rRNA + S-adenosyl-L-methionine = 5-methylcytidine(967) in 16S rRNA + S-adenosyl-L-homocysteine + H(+). Its function is as follows. Specifically methylates the cytosine at position 967 (m5C967) of 16S rRNA. This Escherichia coli (strain UTI89 / UPEC) protein is Ribosomal RNA small subunit methyltransferase B.